We begin with the raw amino-acid sequence, 291 residues long: Pantothenate synthetase 1 (291 aa).

Residue H37 is the Proton donor of the active site. ATP is bound at residue 147 to 150 (GEKD). Residue Q153 coordinates (R)-pantoate. Residue 184–187 (ISSR) participates in ATP binding.

It belongs to the pantothenate synthetase family. In terms of assembly, homodimer.

Its subcellular location is the cytoplasm. The enzyme catalyses (R)-pantoate + beta-alanine + ATP = (R)-pantothenate + AMP + diphosphate + H(+). It participates in cofactor biosynthesis; (R)-pantothenate biosynthesis; (R)-pantothenate from (R)-pantoate and beta-alanine: step 1/1. Catalyzes the condensation of pantoate with beta-alanine in an ATP-dependent reaction via a pantoyl-adenylate intermediate. The polypeptide is Pantothenate synthetase 1 (Frankia alni (strain DSM 45986 / CECT 9034 / ACN14a)).